The sequence spans 323 residues: G patch domain-containing protein 4 (323 aa).

Disordered stretches follow at residues 1–32, 84–110, 124–185, and 197–323; these read MSASSGEKSQGRRFAEQQMHKHGWTEGKGLGR, GVKVNRTKDDDAPVTNKKPRKALSNRN, PGGE…SAKL, and AKYG…NKSE. 2 stretches are compositionally biased toward basic and acidic residues: residues 9–32 and 84–94; these read SQGRRFAEQQMHKHGWTEGKGLGR and GVKVNRTKDDD. The region spanning 11-57 is the G-patch domain; the sequence is GRRFAEQQMHKHGWTEGKGLGRRENGISEAIKVKVKCDHAGVGHNSA. A compositionally biased stretch (low complexity) spans 131–141; it reads KEPSSSESSDS. A compositionally biased stretch (acidic residues) spans 252-261; sequence EREEEEEEES. Over residues 281 to 291 the composition is skewed to basic residues; that stretch reads SKKKKSKKKHR. Polar residues predominate over residues 294 to 306; the sequence is SASPQEEQVTEST. Residues 311-323 are compositionally biased toward basic residues; sequence KPKKKKKKKNKSE.

In Xenopus tropicalis (Western clawed frog), this protein is G patch domain-containing protein 4 (gpatch4).